The chain runs to 77 residues: DNA-directed RNA polymerase subunit epsilon (77 aa).

The protein belongs to the RNA polymerase subunit epsilon family. In terms of assembly, RNAP is composed of a core of 2 alpha, a beta and a beta' subunit. The core is associated with a delta subunit, and at least one of epsilon or omega. When a sigma factor is associated with the core the holoenzyme is formed, which can initiate transcription.

It catalyses the reaction RNA(n) + a ribonucleoside 5'-triphosphate = RNA(n+1) + diphosphate. A non-essential component of RNA polymerase (RNAP). This chain is DNA-directed RNA polymerase subunit epsilon, found in Streptococcus pneumoniae (strain P1031).